A 477-amino-acid chain; its full sequence is Glycogen synthase (477 aa).

Lys-15 serves as a coordination point for ADP-alpha-D-glucose.

Belongs to the glycosyltransferase 1 family. Bacterial/plant glycogen synthase subfamily.

The enzyme catalyses [(1-&gt;4)-alpha-D-glucosyl](n) + ADP-alpha-D-glucose = [(1-&gt;4)-alpha-D-glucosyl](n+1) + ADP + H(+). The protein operates within glycan biosynthesis; glycogen biosynthesis. Synthesizes alpha-1,4-glucan chains using ADP-glucose. This is Glycogen synthase from Shigella sonnei (strain Ss046).